We begin with the raw amino-acid sequence, 1065 residues long: Isoleucine--tRNA ligase (1065 aa).

The short motif at 49-59 (PYVSGAIHLGT) is the 'HIGH' region element. Residues 625–629 (KMSKS) carry the 'KMSKS' region motif. ATP is bound at residue Lys-628.

Belongs to the class-I aminoacyl-tRNA synthetase family. IleS type 2 subfamily. In terms of assembly, monomer. The cofactor is Zn(2+).

The protein localises to the cytoplasm. It carries out the reaction tRNA(Ile) + L-isoleucine + ATP = L-isoleucyl-tRNA(Ile) + AMP + diphosphate. Its function is as follows. Catalyzes the attachment of isoleucine to tRNA(Ile). As IleRS can inadvertently accommodate and process structurally similar amino acids such as valine, to avoid such errors it has two additional distinct tRNA(Ile)-dependent editing activities. One activity is designated as 'pretransfer' editing and involves the hydrolysis of activated Val-AMP. The other activity is designated 'posttransfer' editing and involves deacylation of mischarged Val-tRNA(Ile). The chain is Isoleucine--tRNA ligase from Thermococcus kodakarensis (strain ATCC BAA-918 / JCM 12380 / KOD1) (Pyrococcus kodakaraensis (strain KOD1)).